Consider the following 887-residue polypeptide: Alanine--tRNA ligase (887 aa).

Residues His-564, His-568, Cys-676, and His-680 each contribute to the Zn(2+) site.

This sequence belongs to the class-II aminoacyl-tRNA synthetase family. Zn(2+) is required as a cofactor.

It is found in the cytoplasm. The enzyme catalyses tRNA(Ala) + L-alanine + ATP = L-alanyl-tRNA(Ala) + AMP + diphosphate. Catalyzes the attachment of alanine to tRNA(Ala) in a two-step reaction: alanine is first activated by ATP to form Ala-AMP and then transferred to the acceptor end of tRNA(Ala). Also edits incorrectly charged Ser-tRNA(Ala) and Gly-tRNA(Ala) via its editing domain. This Rhizobium meliloti (strain 1021) (Ensifer meliloti) protein is Alanine--tRNA ligase.